A 262-amino-acid chain; its full sequence is Glutamine-binding protein (262 aa).

Positions 1 to 26 are cleaved as a signal peptide; the sequence is MKRKTVWKIWITLALIALLSITALAG. A lipid anchor (N-palmitoyl cysteine) is attached at cysteine 27. Residue cysteine 27 is the site of S-diacylglycerol cysteine attachment.

The protein belongs to the bacterial solute-binding protein 3 family.

It is found in the cell membrane. Its function is as follows. Involved in glutamine-transport system. Interacts with the glutamine-transport system GlnPQ. The polypeptide is Glutamine-binding protein (glnH) (Geobacillus stearothermophilus (Bacillus stearothermophilus)).